Reading from the N-terminus, the 606-residue chain is WD repeat-containing protein 1 (606 aa).

13 WD repeats span residues Glu4–Ile45, Pro48–Thr87, Ile93–Thr135, Ser138–Gly176, Lys180–Gly218, Val224–Val263, Ser270–Lys306, Lys311–Ser351, Ser358–Val408, Leu432–Ile474, Lys480–Val518, Ser523–Leu561, and Thr566–Ile604. N6-acetyllysine is present on residues Lys28, Lys81, Lys95, and Lys115. Tyr238 is subject to Phosphotyrosine. Lys480 bears the N6-acetyllysine mark.

This sequence belongs to the WD repeat AIP1 family.

It is found in the cytoplasm. The protein localises to the cytoskeleton. It localises to the cell projection. The protein resides in the podosome. Induces disassembly of actin filaments in conjunction with ADF/cofilin family proteins. Enhances cofilin-mediated actin severing. Involved in cytokinesis. Involved in chemotactic cell migration by restricting lamellipodial membrane protrusions. Involved in myocardium sarcomere organization. Required for cardiomyocyte growth and maintenance. Involved in megakaryocyte maturation and platelet shedding. Required for the establishment of planar cell polarity (PCP) during follicular epithelium development and for cell shape changes during PCP; the function seems to implicate cooperation with CFL1 and/or DSTN/ADF. Involved in the generation/maintenance of cortical tension. Involved in assembly and maintenance of epithelial apical cell junctions and plays a role in the organization of the perijunctional actomyosin belt. The polypeptide is WD repeat-containing protein 1 (Wdr1) (Rattus norvegicus (Rat)).